Consider the following 354-residue polypeptide: DNA polymerase IV (354 aa).

In terms of domain architecture, UmuC spans 3-188 (VIFVDFDYFF…LDIDEIPGIG (186 aa)). Positions 7 and 105 each coordinate Mg(2+). Glu-106 is an active-site residue.

It belongs to the DNA polymerase type-Y family. As to quaternary structure, monomer. Requires Mg(2+) as cofactor.

Its subcellular location is the cytoplasm. The catalysed reaction is DNA(n) + a 2'-deoxyribonucleoside 5'-triphosphate = DNA(n+1) + diphosphate. Poorly processive, error-prone DNA polymerase involved in untargeted mutagenesis. Copies undamaged DNA at stalled replication forks, which arise in vivo from mismatched or misaligned primer ends. These misaligned primers can be extended by PolIV. Exhibits no 3'-5' exonuclease (proofreading) activity. May be involved in translesional synthesis. This is DNA polymerase IV from Sulfolobus acidocaldarius (strain ATCC 33909 / DSM 639 / JCM 8929 / NBRC 15157 / NCIMB 11770).